Reading from the N-terminus, the 460-residue chain is Cysteine--tRNA ligase (460 aa).

Position 27 (cysteine 27) interacts with Zn(2+). The 'HIGH' region motif lies at 29–39 (PTVYDDAHLGH). Residues cysteine 202, histidine 227, and glutamate 231 each coordinate Zn(2+). Positions 259–263 (KMSKS) match the 'KMSKS' region motif. Position 262 (lysine 262) interacts with ATP.

The protein belongs to the class-I aminoacyl-tRNA synthetase family. In terms of assembly, monomer. It depends on Zn(2+) as a cofactor.

The protein localises to the cytoplasm. It catalyses the reaction tRNA(Cys) + L-cysteine + ATP = L-cysteinyl-tRNA(Cys) + AMP + diphosphate. The sequence is that of Cysteine--tRNA ligase from Campylobacter lari (strain RM2100 / D67 / ATCC BAA-1060).